We begin with the raw amino-acid sequence, 359 residues long: 4-galactosyl-N-acetylglucosaminide 3-alpha-L-fucosyltransferase FUT6 (359 aa).

Residues 1–14 (MDPLGPAKPQWSCR) are Cytoplasmic-facing. A helical; Signal-anchor for type II membrane protein transmembrane segment spans residues 15-34 (CCLTTLLFQLLVAVCFFSYL). At 35-359 (RVSRDDPTVY…QTRSITAWFT (325 aa)) the chain is on the lumenal side. 4 N-linked (GlcNAc...) asparagine glycosylation sites follow: asparagine 46, asparagine 91, asparagine 153, and asparagine 184. Positions 73-112 (KPTALPRCSEMLPGTADCNITADRKVYPQADAVIVHHREV) are determines site-specific fucosylation.

The protein belongs to the glycosyltransferase 10 family. Homodimer and monomer. Monomer (secreted form). Post-translationally, N-glycosylated. Proteolytic cleavage releases a secreted glycoform of 43 kDa.

It localises to the golgi apparatus. The protein resides in the golgi stack membrane. Its subcellular location is the secreted. It carries out the reaction a beta-D-galactosyl-(1-&gt;4)-N-acetyl-beta-D-glucosaminyl derivative + GDP-beta-L-fucose = a beta-D-galactosyl-(1-&gt;4)-[alpha-L-fucosyl-(1-&gt;3)]-N-acetyl-beta-D-glucosaminyl derivative + GDP + H(+). The enzyme catalyses an N-acetyl-alpha-neuraminyl-(2-&gt;3)-beta-D-galactosyl-(1-&gt;4)-N-acetyl-beta-D-glucosaminyl derivative + GDP-beta-L-fucose = an alpha-Neu5Ac-(2-&gt;3)-beta-D-Gal-(1-&gt;4)-[alpha-L-Fuc-(1-&gt;3)]-beta-D-GlcNAc derivative + GDP + H(+). It catalyses the reaction an alpha-Neu5Ac-(2-&gt;3)-beta-D-Gal-(1-&gt;4)-beta-D-GlcNAc-(1-&gt;3)-beta-D-Gal-(1-&gt;4)-[alpha-L-Fuc-(1-&gt;3)]-beta-D-GlcNAc derivative + GDP-beta-L-fucose = an alpha-Neu5Ac-(2-&gt;3)-beta-D-Gal-(1-&gt;4)-[alpha-L-Fuc-(1-&gt;3)]-beta-D-GlcNAc-(1-&gt;3)-beta-D-Gal-(1-&gt;4)-[alpha-L-Fuc-(1-&gt;3)]-beta-D-GlcNAc derivative + GDP + H(+). The catalysed reaction is a neolactoside nLc6Cer + GDP-beta-L-fucose = beta-D-Gal-(1-&gt;4)-[alpha-L-Fuc-(1-&gt;3)]-beta-D-GlcNAc-(1-&gt;3)-beta-D-Gal-(1-&gt;4)-beta-D-GlcNAc-(1-&gt;3)-beta-D-Gal-(1-&gt;4)-beta-D-Glc-(1&lt;-&gt;1')-Cer + GDP + H(+). It carries out the reaction a neolactoside nLc6Cer + GDP-beta-L-fucose = beta-D-galactosyl-(1-&gt;4)-N-acetyl-beta-D-glucosaminyl-(1-&gt;3)-beta-D-galactosyl-(1-&gt;4)-[alpha-L-fucosyl-(1-&gt;3)]-N-acetyl-beta-D-glucosaminyl-(1-&gt;3)-beta-D-galactosyl-(1-&gt;4)-beta-D-glucosyl-(1&lt;-&gt;1')-ceramide + GDP + H(+). The enzyme catalyses a neolactoside VI(3)-alpha-NeuNAc-nLc6Cer + GDP-beta-L-fucose = a neolactoside VI(3)-alpha-NeuAc,V(3)-alphaFuc-nLc6Cer + GDP + H(+). It catalyses the reaction beta-D-galactosyl-(1-&gt;4)-N-acetyl-D-glucosamine + GDP-beta-L-fucose = beta-D-galactosyl-(1-&gt;4)-[alpha-L-fucosyl-(1-&gt;3)]-N-acetyl-D-glucosamine + GDP + H(+). The catalysed reaction is N-acetyl-alpha-neuraminosyl-(2-&gt;3)-beta-D-galactosyl-(1-&gt;4)-N-acetyl-beta-D-glucosamine + GDP-beta-L-fucose = N-acetyl-alpha-neuraminosyl-(2-&gt;3)-beta-D-galactosyl-(1-&gt;4)-[alpha-L-fucosyl-(1-&gt;3)]-N-acetyl-beta-D-glucosamine + GDP + H(+). It carries out the reaction lactose + GDP-beta-L-fucose = beta-D-galactosyl-(1-&gt;4)-[alpha-L-fucosyl-(1-&gt;3)]-D-glucose + GDP + H(+). The enzyme catalyses alpha-L-Fuc-(1-&gt;2)-beta-D-Gal-(1-&gt;4)-D-Glc + GDP-beta-L-fucose = alpha-L-Fuc-(1-&gt;2)-beta-D-Gal-(1-&gt;4)-[alpha-L-Fuc-(1-&gt;3)]-D-Glc + GDP + H(+). It catalyses the reaction a beta-D-galactosyl-(1-&gt;4)-N-acetyl-beta-D-6-sulfooxy-glucosaminyl derivative + GDP-beta-L-fucose = a beta-D-galactosyl-(1-&gt;4)-[alpha-L-fucosyl-(1-&gt;3)]-N-acetyl-beta-D-6-sulfooxy-glucosaminyl derivative + GDP + H(+). It functions in the pathway protein modification; protein glycosylation. Functionally, catalyzes the transfer of L-fucose, from a guanosine diphosphate-beta-L-fucose, to the N-acetyl glucosamine (GlcNAc) of a distal alpha2,3 sialylated lactosamine unit of a glycoprotein- or glycolipid-linked sialopolylactosamines chain or of a distal or internal lactosamine unit of a neutral glycoprotein- or glycolipid-linked polylactosamines chain through an alpha-1,3 glycosidic linkage and participates in surface expression of the sialyl Lewis X (sLe(x)), Lewis X (Le(x)) and non sialylated VIM2 determinants. Moreover transfers fucose to H-type 2 (Fucalpha1-2Galbeta1-4GlcNAc) chain acceptor substrates and participates in difucosylated sialyl Lewis x determinants. Also fucosylates a polylactosamine substrate having a 6 sulfate modification at the GlcNAc moiety and gives rise to sialyl and non-sialyl 6-sulfo lewis X. Does not have activity towards type 1 ((Galbeta1-3GlcNAc)) and H-type 1 chain (Fucalpha1-2Galbeta1-3GlcNAc) acceptors substrates. The chain is 4-galactosyl-N-acetylglucosaminide 3-alpha-L-fucosyltransferase FUT6 from Gorilla gorilla gorilla (Western lowland gorilla).